The primary structure comprises 203 residues: uncharacterized protein (203 aa).

Disordered regions lie at residues 65-84 (LSLSEDEDEDESELEDSFDS) and 92-170 (SSSS…ETAL). Composition is skewed to acidic residues over residues 68-82 (SEDEDEDESELEDSF) and 98-110 (SEEESEEEEEESL). The span at 111–122 (DSSFLVSASLSL) shows a compositional bias: low complexity. Residues 123-168 (SEDDEEEDSESEDEDEDEDSDSDSDSDSDSDEDEDEDEDSEEEEET) show a composition bias toward acidic residues. The chain crosses the membrane as a helical span at residues 182 to 202 (TSFLLPFTLVVLAILFYPAWV).

The protein resides in the membrane. This is an uncharacterized protein from Saccharomyces cerevisiae (strain ATCC 204508 / S288c) (Baker's yeast).